Reading from the N-terminus, the 106-residue chain is Tapetal oleosin GRP-19 (106 aa).

Helical transmembrane passes span 14–34, 37–57, and 58–78; these read ALAL…ACII, PLFV…TLLA, and SGFT…SWLY. Residues 84 to 106 form a disordered region; it reads RDLPKIPGLTPPAPASNPAGSGV.

The protein belongs to the oleosin family. Post-translationally, proteolytically cleaved following anther tapetal breakdown. Present in pollen (at protein level). Inflorescence-specific expression, especially in flowers florets.

The protein localises to the secreted. The protein resides in the extracellular space. It is found in the extracellular matrix. Its subcellular location is the pollen coat. It localises to the lipid droplet. The protein localises to the membrane. Functionally, lipid-binding oleosin involved in anther tapetum development, especially for the physiology of tapetosomes. Also implicated in the formation of pollen coat. This chain is Tapetal oleosin GRP-19, found in Arabidopsis thaliana (Mouse-ear cress).